A 185-amino-acid polypeptide reads, in one-letter code: Ribosome-recycling factor (185 aa).

This sequence belongs to the RRF family.

The protein localises to the cytoplasm. Responsible for the release of ribosomes from messenger RNA at the termination of protein biosynthesis. May increase the efficiency of translation by recycling ribosomes from one round of translation to another. In Shewanella baltica (strain OS223), this protein is Ribosome-recycling factor.